A 1551-amino-acid polypeptide reads, in one-letter code: UDP-glucose:glycoprotein glucosyltransferase 1 (1551 aa).

The N-terminal stretch at 1–42 (MCSRGDANTADAAAARRVTGLRYNMRLLIALALPCLFSLAEA) is a signal peptide. N-linked (GlcNAc...) asparagine glycosylation is found at asparagine 269, asparagine 536, and asparagine 1228. The segment at 1244–1551 (KAEEVKQDKD…QEGSQKHEEL (308 aa)) is glucosyltransferase. Serine 1277 carries the phosphoserine modification. Residues 1531–1551 (KELGTLHTEETQEGSQKHEEL) form a disordered region. Positions 1548-1551 (HEEL) match the Prevents secretion from ER motif.

This sequence belongs to the glycosyltransferase 8 family. In terms of assembly, monomer as well as in a tight complex with SELENOF. Interacts with METTL23. Part of a large chaperone multiprotein complex comprising DNAJB11, HSP90B1, HSPA5, HYOU, PDIA2, PDIA4, PDIA6, PPIB, SDF2L1, UGGT1 and very small amounts of ERP29, but not, or at very low levels, CALR nor CANX. The cofactor is Ca(2+). It depends on Mn(2+) as a cofactor.

Its subcellular location is the endoplasmic reticulum lumen. The protein localises to the endoplasmic reticulum-Golgi intermediate compartment. It carries out the reaction N(4)-(alpha-D-Man-(1-&gt;2)-alpha-D-Man-(1-&gt;2)-alpha-D-Man-(1-&gt;3)-[alpha-D-Man-(1-&gt;2)-alpha-D-Man-(1-&gt;3)-[alpha-D-Man-(1-&gt;2)-alpha-D-Man-(1-&gt;6)]-alpha-D-Man-(1-&gt;6)]-beta-D-Man-(1-&gt;4)-beta-D-GlcNAc-(1-&gt;4)-beta-D-GlcNAc)-L-asparaginyl-[protein] (N-glucan mannose isomer 9A1,2,3B1,2,3) + UDP-alpha-D-glucose = N(4)-(alpha-D-Glc-(1-&gt;3)-alpha-D-Man-(1-&gt;2)-alpha-D-Man-(1-&gt;2)-alpha-D-Man-(1-&gt;3)-[alpha-D-Man-(1-&gt;2)-alpha-D-Man-(1-&gt;3)-[alpha-D-Man-(1-&gt;2)-alpha-D-Man-(1-&gt;6)]-alpha-D-Man-(1-&gt;6)]-beta-D-Man-(1-&gt;4)-beta-D-GlcNAc-(1-&gt;4)-beta-D-GlcNAc)-L-asparaginyl-[protein] + UDP + H(+). It participates in protein modification; protein glycosylation. Functionally, recognizes glycoproteins with minor folding defects. Reglucosylates single N-glycans near the misfolded part of the protein, thus providing quality control for protein folding in the endoplasmic reticulum. Reglucosylated proteins are recognized by calreticulin for recycling to the endoplasmic reticulum and refolding or degradation. This chain is UDP-glucose:glycoprotein glucosyltransferase 1 (Uggt1), found in Mus musculus (Mouse).